The sequence spans 503 residues: Maturase K (503 aa).

It belongs to the intron maturase 2 family. MatK subfamily.

The protein resides in the plastid. Its subcellular location is the chloroplast. Its function is as follows. Usually encoded in the trnK tRNA gene intron. Probably assists in splicing its own and other chloroplast group II introns. The sequence is that of Maturase K from Eucalyptus globulus subsp. globulus (Tasmanian blue gum).